A 165-amino-acid polypeptide reads, in one-letter code: Cytochrome c-type biogenesis protein CcmE (165 aa).

At Met1–Arg29 the chain is on the cytoplasmic side. Residues Leu30–Ala50 form a helical; Signal-anchor for type II membrane protein membrane-spanning segment. At Phe51–Lys165 the chain is on the periplasmic side. Residues His143 and Tyr147 each coordinate heme.

This sequence belongs to the CcmE/CycJ family.

The protein localises to the cell inner membrane. Functionally, heme chaperone required for the biogenesis of c-type cytochromes. Transiently binds heme delivered by CcmC and transfers the heme to apo-cytochromes in a process facilitated by CcmF and CcmH. The chain is Cytochrome c-type biogenesis protein CcmE from Brucella anthropi (strain ATCC 49188 / DSM 6882 / CCUG 24695 / JCM 21032 / LMG 3331 / NBRC 15819 / NCTC 12168 / Alc 37) (Ochrobactrum anthropi).